We begin with the raw amino-acid sequence, 302 residues long: tRNA dimethylallyltransferase (302 aa).

9-16 contributes to the ATP binding site; that stretch reads GPTAAGKS. 11 to 16 provides a ligand contact to substrate; it reads TAAGKS. The segment at 34-37 is interaction with substrate tRNA; that stretch reads DSRQ.

This sequence belongs to the IPP transferase family. Monomer. Requires Mg(2+) as cofactor.

It carries out the reaction adenosine(37) in tRNA + dimethylallyl diphosphate = N(6)-dimethylallyladenosine(37) in tRNA + diphosphate. In terms of biological role, catalyzes the transfer of a dimethylallyl group onto the adenine at position 37 in tRNAs that read codons beginning with uridine, leading to the formation of N6-(dimethylallyl)adenosine (i(6)A). The polypeptide is tRNA dimethylallyltransferase (Gloeobacter violaceus (strain ATCC 29082 / PCC 7421)).